Reading from the N-terminus, the 586-residue chain is MQIIEITEPKQTDCQQKLQIAVGIDFGTTNSLIAIATNRKVNIIKSKGDKELIPTTIDFINEDLIIGNNKGLRSIKRLFGKTLKEILNTKTLFALVKDYLDINSSELKLNFANKKMRIAEIAAEVFIYLKNQAEKQLKNNITKAVITIPAHFNDTARGEIMLAAKIAGFEVLRLIAEPTAAAYAYGLNRNQTGRYLVYDLGGGTFDVSILNIQEGIFQVIATNGDNMLGGDDIDVVITQYICNKFDLPNSSETLQLAKKAKETLTYKESFNNDIISINKQTLEQLIFPLVKHTINITQECLEQSGNPNIDGVILVGGTTRIPLIKDELYKAFKINILSDIDPDKAVVCGAALQAENLIAPHTNSLLIDVVPLSLGIELYGGIVEKIIMRNTPIPIAVIKEFTTYADNQTGIQFHILQGEREMAADCRSLARFELKGLPPMKAGNIRAEVTFAIDADGILSISAYEKISNISHTIEVKPNHGIDKTEIEIMLENAYKNASIDYTTRLLQEEIIETEALISNIERSIIELTTLLSESEISIINALFDNIKYAVQTRDQTLIKHSIKEFKSKIKNIWIQNIININDLRK.

Belongs to the heat shock protein 70 family.

Chaperone involved in the maturation of iron-sulfur cluster-containing proteins. Has a low intrinsic ATPase activity which is markedly stimulated by HscB. This chain is Chaperone protein HscA homolog, found in Rickettsia typhi (strain ATCC VR-144 / Wilmington).